A 99-amino-acid chain; its full sequence is Cell division protein FtsB (99 aa).

Residues 1–3 (MRV) are Cytoplasmic-facing. The helical transmembrane segment at 4–21 (FTAILLILLVLLQYRLWF) threads the bilayer. The Periplasmic segment spans residues 22–99 (GKNSVPDYLV…KENSTRNVNN (78 aa)). The stretch at 29-53 (YLVLKENVVRQQSANEKLQQRNKLL) forms a coiled coil.

Belongs to the FtsB family. In terms of assembly, part of a complex composed of FtsB, FtsL and FtsQ.

The protein resides in the cell inner membrane. Its function is as follows. Essential cell division protein. May link together the upstream cell division proteins, which are predominantly cytoplasmic, with the downstream cell division proteins, which are predominantly periplasmic. This Colwellia psychrerythraea (strain 34H / ATCC BAA-681) (Vibrio psychroerythus) protein is Cell division protein FtsB.